The sequence spans 406 residues: Pyruvate dehydrogenase E1 component subunit beta-3, chloroplastic (406 aa).

Residues 1-70 (MSAILQGAGA…PLIPNAVTTK (70 aa)) constitute a chloroplast transit peptide. Position 142 (Glu-142) interacts with thiamine diphosphate. Residues Val-195, Ala-243, Ile-244, and Asn-248 each contribute to the K(+) site.

Tetramer of 2 alpha and 2 beta subunits. Requires thiamine diphosphate as cofactor.

The protein resides in the plastid. The protein localises to the chloroplast. It catalyses the reaction N(6)-[(R)-lipoyl]-L-lysyl-[protein] + pyruvate + H(+) = N(6)-[(R)-S(8)-acetyldihydrolipoyl]-L-lysyl-[protein] + CO2. Functionally, the pyruvate dehydrogenase complex catalyzes the overall conversion of pyruvate to acetyl-CoA and CO(2). It contains multiple copies of three enzymatic components: pyruvate dehydrogenase (E1), dihydrolipoamide acetyltransferase (E2) and lipoamide dehydrogenase (E3). This chain is Pyruvate dehydrogenase E1 component subunit beta-3, chloroplastic (E1-BETA-2), found in Arabidopsis thaliana (Mouse-ear cress).